A 552-amino-acid chain; its full sequence is Putative transport protein APJL_0985 (552 aa).

A run of 5 helical transmembrane segments spans residues isoleucine 4–isoleucine 24, valine 29–leucine 49, phenylalanine 65–serine 85, glycine 95–phenylalanine 115, and isoleucine 161–phenylalanine 181. RCK C-terminal domains are found at residues glutamine 190–glutamate 275 and alanine 277–aspartate 360. A run of 6 helical transmembrane segments spans residues methionine 370 to leucine 390, glycine 403 to methionine 425, isoleucine 438 to leucine 458, leucine 463 to valine 483, tyrosine 492 to alanine 512, and valine 529 to tryptophan 549.

The protein belongs to the AAE transporter (TC 2.A.81) family. YidE subfamily.

It localises to the cell membrane. The chain is Putative transport protein APJL_0985 from Actinobacillus pleuropneumoniae serotype 3 (strain JL03).